The chain runs to 386 residues: S-adenosylmethionine synthase (386 aa).

His16 is an ATP binding site. Asp18 provides a ligand contact to Mg(2+). Glu44 contributes to the K(+) binding site. L-methionine is bound by residues Glu57 and Gln100. Positions 100 to 110 (QSPDINQGVDQ) are flexible loop. ATP contacts are provided by residues 164–166 (DGK), 230–231 (RF), Asp239, 245–246 (RK), Ala262, and Lys266. Asp239 provides a ligand contact to L-methionine. L-methionine is bound at residue Lys270.

Belongs to the AdoMet synthase family. As to quaternary structure, homotetramer; dimer of dimers. It depends on Mg(2+) as a cofactor. The cofactor is K(+).

The protein localises to the cytoplasm. The enzyme catalyses L-methionine + ATP + H2O = S-adenosyl-L-methionine + phosphate + diphosphate. The protein operates within amino-acid biosynthesis; S-adenosyl-L-methionine biosynthesis; S-adenosyl-L-methionine from L-methionine: step 1/1. In terms of biological role, catalyzes the formation of S-adenosylmethionine (AdoMet) from methionine and ATP. The overall synthetic reaction is composed of two sequential steps, AdoMet formation and the subsequent tripolyphosphate hydrolysis which occurs prior to release of AdoMet from the enzyme. This Nitratiruptor sp. (strain SB155-2) protein is S-adenosylmethionine synthase.